The chain runs to 713 residues: Nuclear poly(A) polymerase 1 (713 aa).

Residues 91–93 (FGS), 103–106 (ADID), Asp159, Tyr229, and 238–239 (GI) contribute to the ATP site. Residues Asp104, Asp106, and Asp159 each contribute to the Mg(2+) site. The interval 480 to 555 (FVFPGGVRPS…TLTDQPRNSK (76 aa)) is disordered. A compositionally biased stretch (low complexity) spans 507 to 526 (SSTSSAPAATTTTTEMSSES).

It belongs to the poly(A) polymerase family. Monomer. Forms a complex with cleavage and polyadenylation specificity factor (CPSF) subunit PAPS4. The cofactor is Mg(2+). Mn(2+) serves as cofactor. In terms of tissue distribution, expressed in stems, cotyledons, hypocotyls, radicle, leaves, and, to a lower extent, in roots (including primary and secondary roots as well as root tips) and flowers. In radicle, roots and leaves, mainly present in vascular tissues.

It localises to the nucleus. The enzyme catalyses RNA(n) + ATP = RNA(n)-3'-adenine ribonucleotide + diphosphate. Its function is as follows. Essential protein. Polymerase that creates the 3'-poly(A) tail of mRNA's. Also required for the endoribonucleolytic cleavage reaction at some polyadenylation sites. May acquire specificity through interaction with a cleavage and polyadenylation specificity factor (CPSF) at its C-terminus. This Arabidopsis thaliana (Mouse-ear cress) protein is Nuclear poly(A) polymerase 1.